Consider the following 677-residue polypeptide: Methionine--tRNA ligase (677 aa).

A 'HIGH' region motif is present at residues 15 to 25; it reads PYANGSIHLGH. Residues cysteine 146, cysteine 149, cysteine 159, and cysteine 162 each coordinate Zn(2+). Positions 333 to 337 match the 'KMSKS' region motif; it reads KMSKS. Lysine 336 is a binding site for ATP. Residues 576-677 form the tRNA-binding domain; it reads DFAKIDLRVA…EGAKPGMRVK (102 aa).

The protein belongs to the class-I aminoacyl-tRNA synthetase family. MetG type 1 subfamily. Homodimer. The cofactor is Zn(2+).

It is found in the cytoplasm. The enzyme catalyses tRNA(Met) + L-methionine + ATP = L-methionyl-tRNA(Met) + AMP + diphosphate. In terms of biological role, is required not only for elongation of protein synthesis but also for the initiation of all mRNA translation through initiator tRNA(fMet) aminoacylation. The chain is Methionine--tRNA ligase from Aeromonas hydrophila subsp. hydrophila (strain ATCC 7966 / DSM 30187 / BCRC 13018 / CCUG 14551 / JCM 1027 / KCTC 2358 / NCIMB 9240 / NCTC 8049).